The chain runs to 395 residues: Flap endonuclease 1 (395 aa).

Residues 1–104 form an N-domain region; sequence MGIKHLYQVI…GELAKRSARK (104 aa). Asp-34 lines the Mg(2+) pocket. Residues Arg-47 and Arg-70 each coordinate DNA. Asp-86 serves as a coordination point for Mg(2+). Positions 94 to 124 are disordered; it reads GGELAKRSARKREAHEAHEEAKETGTAEDME. An I-domain region spans residues 122–253; sequence DMEKFSRRTV…NTALKLIREH (132 aa). Glu-158, Glu-160, Asp-179, and Asp-181 together coordinate Mg(2+). Glu-158 is a DNA binding site. Positions 231 and 233 each coordinate DNA. Asp-233 is a binding site for Mg(2+). Residues 341–349 are interaction with PCNA; that stretch reads QQSRLEGFF. The segment covering 356–389 has biased composition (basic and acidic residues); sequence DAEKASMKRKHDEKIEEQKKRKKEDAKAKKEAKA. The interval 356–395 is disordered; sequence DAEKASMKRKHDEKIEEQKKRKKEDAKAKKEAKARPRGAV.

It belongs to the XPG/RAD2 endonuclease family. FEN1 subfamily. In terms of assembly, interacts with PCNA. Three molecules of fen1 bind to one PCNA trimer with each molecule binding to one PCNA monomer. PCNA stimulates the nuclease activity without altering cleavage specificity. Mg(2+) is required as a cofactor. In terms of processing, phosphorylated. Phosphorylation upon DNA damage induces relocalization to the nuclear plasma.

Its subcellular location is the nucleus. The protein localises to the nucleolus. It is found in the nucleoplasm. The protein resides in the mitochondrion. Its function is as follows. Structure-specific nuclease with 5'-flap endonuclease and 5'-3' exonuclease activities involved in DNA replication and repair. During DNA replication, cleaves the 5'-overhanging flap structure that is generated by displacement synthesis when DNA polymerase encounters the 5'-end of a downstream Okazaki fragment. It enters the flap from the 5'-end and then tracks to cleave the flap base, leaving a nick for ligation. Also involved in the long patch base excision repair (LP-BER) pathway, by cleaving within the apurinic/apyrimidinic (AP) site-terminated flap. Acts as a genome stabilization factor that prevents flaps from equilibrating into structures that lead to duplications and deletions. Also possesses 5'-3' exonuclease activity on nicked or gapped double-stranded DNA, and exhibits RNase H activity. Also involved in replication and repair of rDNA and in repairing mitochondrial DNA. The sequence is that of Flap endonuclease 1 (fen1) from Talaromyces marneffei (strain ATCC 18224 / CBS 334.59 / QM 7333) (Penicillium marneffei).